Consider the following 398-residue polypeptide: Acetate kinase 1 (398 aa).

Position 9 (N9) interacts with Mg(2+). K16 contributes to the ATP binding site. R89 serves as a coordination point for substrate. The active-site Proton donor/acceptor is D146. ATP-binding positions include 206-210 (HLGNG), 281-283 (DCR), and 329-333 (GIGEN). E384 contributes to the Mg(2+) binding site.

The protein belongs to the acetokinase family. In terms of assembly, homodimer. It depends on Mg(2+) as a cofactor. The cofactor is Mn(2+).

Its subcellular location is the cytoplasm. The enzyme catalyses acetate + ATP = acetyl phosphate + ADP. It functions in the pathway metabolic intermediate biosynthesis; acetyl-CoA biosynthesis; acetyl-CoA from acetate: step 1/2. Its function is as follows. Catalyzes the formation of acetyl phosphate from acetate and ATP. Can also catalyze the reverse reaction. The polypeptide is Acetate kinase 1 (Vibrio parahaemolyticus serotype O3:K6 (strain RIMD 2210633)).